The sequence spans 78 residues: Small ribosomal subunit protein bS18 (78 aa).

The protein belongs to the bacterial ribosomal protein bS18 family. In terms of assembly, part of the 30S ribosomal subunit. Forms a tight heterodimer with protein bS6.

Its function is as follows. Binds as a heterodimer with protein bS6 to the central domain of the 16S rRNA, where it helps stabilize the platform of the 30S subunit. This Pediococcus pentosaceus (strain ATCC 25745 / CCUG 21536 / LMG 10740 / 183-1w) protein is Small ribosomal subunit protein bS18.